Here is a 114-residue protein sequence, read N- to C-terminus: Ribonuclease P protein component (114 aa).

This sequence belongs to the RnpA family. In terms of assembly, consists of a catalytic RNA component (M1 or rnpB) and a protein subunit.

The enzyme catalyses Endonucleolytic cleavage of RNA, removing 5'-extranucleotides from tRNA precursor.. In terms of biological role, RNaseP catalyzes the removal of the 5'-leader sequence from pre-tRNA to produce the mature 5'-terminus. It can also cleave other RNA substrates such as 4.5S RNA. The protein component plays an auxiliary but essential role in vivo by binding to the 5'-leader sequence and broadening the substrate specificity of the ribozyme. The sequence is that of Ribonuclease P protein component from Legionella pneumophila (strain Paris).